A 322-amino-acid polypeptide reads, in one-letter code: Reticulocalbin-1 (322 aa).

The first 19 residues, M1 to A19, serve as a signal peptide directing secretion. A glycan (N-linked (GlcNAc...) asparagine) is linked at N44. EF-hand domains are found at residues E70–R105, Y106–S141, K157–E192, M194–R229, W235–D270, and H271–S306. Ca(2+) is bound by residues D83, D85, N87, Y89, E94, D119, N121, D123, K125, E130, D170, D172, D174, E181, D207, N209, D211, H213, E218, D248, N250, D252, K254, E259, D284, D286, D288, M290, and E295. The Prevents secretion from ER motif lies at H319 to L322.

The protein belongs to the CREC family.

It localises to the endoplasmic reticulum lumen. May regulate calcium-dependent activities in the endoplasmic reticulum lumen or post-ER compartment. The sequence is that of Reticulocalbin-1 (rcn1) from Takifugu rubripes (Japanese pufferfish).